Here is a 67-residue protein sequence, read N- to C-terminus: MANIKAVFLICIVAFIAFHCVVAEPTAEDSVVVKRSLGGVISGAKKVAKVAIPIGKAVLPVVAKLVG.

The N-terminal stretch at 1 to 23 is a signal peptide; sequence MANIKAVFLICIVAFIAFHCVVA. Residues 24 to 35 constitute a propeptide that is removed on maturation; it reads EPTAEDSVVVKR.

Homomer of four to six subunits.

It localises to the secreted. Functionally, female-specific peptides with potent activity against Gram-positive and Gram-negative bacteria. They have as well hemolytic activity. This is Ceratotoxin-C (CTXC1) from Ceratitis capitata (Mediterranean fruit fly).